The sequence spans 273 residues: MIRVAVTGCAGNMGSKIIKTVQAQDNMEVVMGIEMPNSPLAGNDLGQQIGLGPMGVEIIGSQDLKTELEKVKPDVLVDFTIAKAAVETVKICAECGVNVVVGTTGLNDEQLDVMHKAIKDNDIKAVISPNMATGVNVFFEIVGQVAKILGNEYDVEIVEAHHHNKQDAPSGTAKRAAEIVAENLNLDLKEKACYGREGMVGKRPENEIGIHAVRGGDIVGDHTVMFCGDGERIEVIHRASTRQAFVNGVIRAINYQSSKQDKNIADMFDVLGL.

Residues 8-13, Glu34, 102-104, and 128-131 contribute to the NAD(+) site; these read GCAGNM, GTT, and SPNM. The active-site Proton donor/acceptor is His161. His162 lines the (S)-2,3,4,5-tetrahydrodipicolinate pocket. The active-site Proton donor is Lys165. 171 to 172 serves as a coordination point for (S)-2,3,4,5-tetrahydrodipicolinate; that stretch reads GT.

It belongs to the DapB family.

The protein localises to the cytoplasm. The catalysed reaction is (S)-2,3,4,5-tetrahydrodipicolinate + NAD(+) + H2O = (2S,4S)-4-hydroxy-2,3,4,5-tetrahydrodipicolinate + NADH + H(+). It catalyses the reaction (S)-2,3,4,5-tetrahydrodipicolinate + NADP(+) + H2O = (2S,4S)-4-hydroxy-2,3,4,5-tetrahydrodipicolinate + NADPH + H(+). The protein operates within amino-acid biosynthesis; L-lysine biosynthesis via DAP pathway; (S)-tetrahydrodipicolinate from L-aspartate: step 4/4. Catalyzes the conversion of 4-hydroxy-tetrahydrodipicolinate (HTPA) to tetrahydrodipicolinate. The sequence is that of 4-hydroxy-tetrahydrodipicolinate reductase from Methanosphaera stadtmanae (strain ATCC 43021 / DSM 3091 / JCM 11832 / MCB-3).